Reading from the N-terminus, the 828-residue chain is Leucine--tRNA ligase (828 aa).

Positions 36-46 (PYPSGKIHIGH) match the 'HIGH' region motif. The short motif at 595–599 (KMSKS) is the 'KMSKS' region element. Position 598 (Lys-598) interacts with ATP.

Belongs to the class-I aminoacyl-tRNA synthetase family.

It localises to the cytoplasm. The catalysed reaction is tRNA(Leu) + L-leucine + ATP = L-leucyl-tRNA(Leu) + AMP + diphosphate. This chain is Leucine--tRNA ligase, found in Rickettsia prowazekii (strain Madrid E).